Here is a 749-residue protein sequence, read N- to C-terminus: Ribosome-releasing factor 2, mitochondrial (749 aa).

Residues 1–22 (MLLLLCNRSVVPRGIRRILRTA) constitute a mitochondrion transit peptide. A tr-type G domain is found at 44–322 (KNIRNIGILA…AVLKYLPAPN (279 aa)). GTP contacts are provided by residues 53 to 60 (AHIDGGKT), 117 to 121 (DTPGH), and 171 to 174 (NKMD).

This sequence belongs to the TRAFAC class translation factor GTPase superfamily. Classic translation factor GTPase family. EF-G/EF-2 subfamily.

It localises to the mitochondrion. In terms of biological role, mitochondrial GTPase that mediates the disassembly of ribosomes from messenger RNA at the termination of mitochondrial protein biosynthesis. Not involved in the GTP-dependent ribosomal translocation step during translation elongation. In Culex quinquefasciatus (Southern house mosquito), this protein is Ribosome-releasing factor 2, mitochondrial.